A 964-amino-acid polypeptide reads, in one-letter code: MNSTLQNQTKTNLEKVGTDPLDTFPRRHIGPNLQQTAEMLKELGLSSVEELIDKAVPVGIRLKKSLDLPKASTEHKILQNLKGIASQNQVFRSYIGAGYHSCIIPGVIQRNILENPGWYTAYTPYQAEISQGRLEALLNFQTMIIDLTGLEISNASLLDEGTAAAEAMFLAYSVRKNETAKKFFVSELCHPQTIDVVVTRANPLGIEVQIGNHESIELNEDFFGVLLQYPATDGKVIDYTSFIQRSHNVGAISTVAADLLALTLLKSPGEMGADIAVGSSQRFGLPLGFGGPHAGYFATKDEFKRSMPGRLIGVSKDSQGNSGLRLSLQTREQHIRRDKATSNICTAQVLLAVISSMYAIYHGPEGLKNIATRIYKFTSIFANVLKNAGFSITNEFFFDTITIQAGAKVQEILNRAYSKKINFREYKDGKIGITLDETVNLEDLKDLLEIFEIKNTDIEKLFVDVSNVPDSFKRKTSYLTHPVFQSHHTETKMLRYIRKLESRDLSLTTSMIPLGSCTMKLNATTEMYPVTWPEFGAIHPFAPADQTKGYKIIFEQLEKWLCEITGFAGVSLQPNAGSQGEYAGLLAIRRYHESRNESYRNVCLIPISAHGTNPASAAMAGFQVVVVSCDPNGNVDLEDLKAKAEEHKKDLAALMITYPSTHGVFEESVKEICQIVHSCGGQVYMDGANMNAQVGLTSPGEIGADVCHLNLHKTFCIPHGGGGPGVGPIGVAKHLVPFLPGHVLVNNATGNEHGAVSAAPWGSASIVLISWVYIALMGSEGLTNATRNSILNANYIAKRLEKVYPVLYKGKNGFVAHECILDLRPFKKSAGIEVEDVAKRLIDYGFHAPTMSFPVPGTLMIEPTESESLEELDRFCEAMLLIYQEILDVQNGTLDKTDNPLKNSPHTAAMVTSDRWDHLYPRERAAYPASWLKDHKFWPYVGRVDNVYGDRNLVCSCLPIESYQ.

Over residues 1–11 (MNSTLQNQTKT) the composition is skewed to polar residues. Residues 1-21 (MNSTLQNQTKTNLEKVGTDPL) are disordered. An N6-(pyridoxal phosphate)lysine modification is found at K713.

The protein belongs to the GcvP family. In terms of assembly, the glycine cleavage system is composed of four proteins: P, T, L and H. Pyridoxal 5'-phosphate serves as cofactor.

It carries out the reaction N(6)-[(R)-lipoyl]-L-lysyl-[glycine-cleavage complex H protein] + glycine + H(+) = N(6)-[(R)-S(8)-aminomethyldihydrolipoyl]-L-lysyl-[glycine-cleavage complex H protein] + CO2. The glycine cleavage system catalyzes the degradation of glycine. The P protein binds the alpha-amino group of glycine through its pyridoxal phosphate cofactor; CO(2) is released and the remaining methylamine moiety is then transferred to the lipoamide cofactor of the H protein. The polypeptide is Glycine dehydrogenase (decarboxylating) (Leptospira interrogans serogroup Icterohaemorrhagiae serovar Lai (strain 56601)).